The following is a 403-amino-acid chain: Prostaglandin D2 receptor 2 (403 aa).

Residues 1–34 (MANITLKPLCPLLEEMVQLPNHSNSSLRYIDHVS) are Extracellular-facing. Asn3, Asn21, and Asn24 each carry an N-linked (GlcNAc...) asparagine glycan. The chain crosses the membrane as a helical span at residues 35–55 (VLLHGLASLLGLVENGLILFV). Over 56-71 (VGCRMRQTVVTTWVLH) the chain is Cytoplasmic. Residues 72–92 (LALSDLLAAASLPFFTYFLAV) form a helical membrane-spanning segment. At 93–104 (GHSWELGTTFCK) the chain is on the extracellular side. Cys103 and Cys198 are disulfide-bonded. The chain crosses the membrane as a helical span at residues 105 to 125 (LHSSVFFLNMFASGFLLSAIS). The Cytoplasmic segment spans residues 126–147 (LDRCLQVVRPVWAQNHRTVAAA). Residues 148 to 168 (HRVCLMLWALAVLNTVPYFVF) traverse the membrane as a helical segment. Topologically, residues 169–209 (RDTIPRRDGRIMCYYNMLLLNPGSDRDTTCDYRQKALAVSK) are extracellular. The helical transmembrane segment at 210-230 (FLLAFMVPLAIIASSHVAVSL) threads the bilayer. Residues 231–245 (QLHHRGRQRTGRFVR) lie on the Cytoplasmic side of the membrane. The chain crosses the membrane as a helical span at residues 246 to 266 (LVAAIVVAFILCWGPYHIFSL). The Extracellular portion of the chain corresponds to 267-284 (LEARAHSVTTLRQLASRG). Residues 285-305 (LPFVTSLAFFNSVVNPLLYVL) traverse the membrane as a helical segment. Residues 306-403 (TCPDMLHKLR…KQGSLSCTLD (98 aa)) are Cytoplasmic-facing. An Involved in the recycling of CRTH2 motif is present at residues 329 to 332 (DSDL). A Phosphoserine modification is found at Ser330. 2 disordered regions span residues 332–353 (LSTGPGKRCRRRHRRRASSTTT) and 384–403 (PRRVREQSQEKQGSLSCTLD). The segment covering 338–348 (KRCRRRHRRRA) has biased composition (basic residues). Ser349 carries the post-translational modification Phosphoserine. Positions 393–403 (EKQGSLSCTLD) are enriched in polar residues.

It belongs to the G-protein coupled receptor 1 family. Phosphorylated.

It localises to the cell membrane. In terms of biological role, receptor for prostaglandin D2 (PGD2). Coupled to the G(i)-protein. Receptor activation may result in pertussis toxin-sensitive decreases in cAMP levels and Ca(2+) mobilization. PI3K signaling is also implicated in mediating PTGDR2 effects. PGD2 induced receptor internalization. CRTH2 internalization can be regulated by diverse kinases such as, PKC, PKA, GRK2, GPRK5/GRK5 and GRK6. Receptor activation is responsible, at least in part, in immune regulation and allergic/inflammation responses. The polypeptide is Prostaglandin D2 receptor 2 (Ptgdr2) (Rattus norvegicus (Rat)).